A 336-amino-acid chain; its full sequence is Nuclear envelope-associated protein 3 (336 aa).

Coiled-coil stretches lie at residues 14-87 (LKDL…IRAS) and 128-261 (VLSK…LKKK). Positions 240–261 (KTKELEDQVENQRRIDQELKKK) match the Bipartite nuclear localization signal motif. The chain crosses the membrane as a helical span at residues 313-330 (LWDKSGFKIVVSMSMLIL).

In terms of assembly, forms homomers and heteromers with NEAP1 and NEAP2. Interacts with SUN1 and SUN2.

The protein resides in the nucleus inner membrane. It is found in the nucleus. It localises to the nucleoplasm. The sequence is that of Nuclear envelope-associated protein 3 from Arabidopsis thaliana (Mouse-ear cress).